The sequence spans 143 residues: Transcription antitermination protein NusB (143 aa).

Belongs to the NusB family.

In terms of biological role, involved in transcription antitermination. Required for transcription of ribosomal RNA (rRNA) genes. Binds specifically to the boxA antiterminator sequence of the ribosomal RNA (rrn) operons. This chain is Transcription antitermination protein NusB, found in Desulfatibacillum aliphaticivorans.